A 494-amino-acid chain; its full sequence is DUF21 domain-containing protein At4g14240 (494 aa).

At 1 to 43 (MHLINAVAAARILSGIGQSNGNNGGEAIPFGSFEWITYAGISC) the chain is on the extracellular side. Residues 31-213 (GSFEWITYAG…GKGGELTHDE (183 aa)) form the CNNM transmembrane domain. Residues 44 to 64 (FLVLFAGIMSGLTLGLMSLGL) form a helical membrane-spanning segment. Residues 65 to 93 (VELEILQRSGTPNEKKQAAAIFPVVQKQH) are Cytoplasmic-facing. A helical membrane pass occupies residues 94–114 (QLLVTLLLCNAMAMEGLPIYL). The Extracellular portion of the chain corresponds to 115–121 (DKLFNEY). Residues 122 to 142 (VAIILSVTFVLAFGEVIPQAI) form a helical membrane-spanning segment. At 143-159 (CTRYGLAVGANFVWLVR) the chain is on the cytoplasmic side. A helical membrane pass occupies residues 160-180 (ILMTLCYPIAFPIGKILDLVL). At 181-494 (GHNDALFRRA…TITEPIRRNN (314 aa)) the chain is on the extracellular side. CBS domains are found at residues 232–292 (MTPI…TETL), 297–352 (CIRR…SNDS), and 364–425 (GNHD…IVDE). N-linked (GlcNAc...) asparagine glycosylation is found at Asn350 and Asn385. A disordered region spans residues 459–494 (QKGTGGQNKQGQTNKVPGQEQDKMLGTITEPIRRNN).

The protein resides in the membrane. The polypeptide is DUF21 domain-containing protein At4g14240 (CBSDUF1) (Arabidopsis thaliana (Mouse-ear cress)).